The sequence spans 645 residues: Developmental regulatory protein wetA (645 aa).

5 disordered regions span residues Ser158 to Lys187, Thr201 to Pro249, Tyr284 to Trp376, Ala461 to Ser578, and Gly596 to Arg618. Over residues Thr240–Pro249 the composition is skewed to polar residues. Composition is skewed to basic residues over residues Gln315 to Gln326 and Gln351 to Gln361. Low complexity predominate over residues Gln362–Gln373. The segment covering Gly509–Asp518 has biased composition (polar residues). The span at Ser528 to Ser546 shows a compositional bias: low complexity. Polar residues predominate over residues Ile562–Gly572.

This sequence belongs to the wetA family.

Its function is as follows. BrlA, abaA and wetA are pivotal regulators of conidiophore development and conidium maturation. They act individually and together to regulate their own expression and that of numerous other sporulation-specific genes. BrlA, abaA and wetA act together to positively regulate the expression of the Pks1 gene cluster that mediates the biosynthesis of an anthraquinone derivative pigment that contributes to conidial pigmentation that provides protection from UV radiation, heat and cold stress. The polypeptide is Developmental regulatory protein wetA (Metarhizium robertsii (strain ARSEF 23 / ATCC MYA-3075) (Metarhizium anisopliae (strain ARSEF 23))).